The sequence spans 413 residues: Palmitoyltransferase ZDHHC6 (413 aa).

Residues 1–24 (MGTFCSVVKFENLQELKRLCHWGP) are Cytoplasmic-facing. Residues 25-45 (IIALGVIAICSAMAMIDSVLW) form a helical membrane-spanning segment. Residues 46 to 57 (YWPLHTTGGSVN) lie on the Lumenal side of the membrane. A helical membrane pass occupies residues 58-78 (FIMLINWTVMILYNYFNAMFV). Residues 79 to 143 (GPGFVPLGWK…NCCGYQNHAS (65 aa)) lie on the Cytoplasmic side of the membrane. One can recognise a DHHC domain in the interval 99–149 (QYCKVCQAYKAPRSHHCRKCNRCVMKMDHHCPWINNCCGYQNHASFTLFLL). Residue Cys-129 is the S-palmitoyl cysteine intermediate of the active site. The helical transmembrane segment at 144–164 (FTLFLLLAPLGCIHAAFIFVM) threads the bilayer. The Lumenal portion of the chain corresponds to 165-194 (TMYTQLYNRLSFGWNTVKIDMSAARRDPLP). Residues 195-215 (IIPFGLAAFAATLFALGLALG) form a helical membrane-spanning segment. The Cytoplasmic segment spans residues 216–413 (TTIAVGMLFF…QAPEGEKKNR (198 aa)). The SH3 domain maps to 313–398 (VRSVRYKVIE…PRNCVEKCPC (86 aa)). 3 S-palmitoyl cysteine lipidation sites follow: Cys-328, Cys-329, and Cys-343. Positions 410–413 (KKNR) match the Di-lysine motif motif.

The protein belongs to the DHHC palmitoyltransferase family. Homooligomerizes. Interacts with SELENOK. Palmitoylated at 3 different sites by ZDHHC16. The combination of the different palmitoylation events strongly affects the quaternary assembly of ZDHHC6, its localization, stability and function. Palmitoylation at Cys-328 accelerates the turnover of ZDHHC6. Depalmitoylated by LYPLA2.

It localises to the endoplasmic reticulum membrane. It carries out the reaction L-cysteinyl-[protein] + hexadecanoyl-CoA = S-hexadecanoyl-L-cysteinyl-[protein] + CoA. The enzyme catalyses L-cysteinyl-[protein] + octadecanoyl-CoA = S-octadecanoyl-L-cysteinyl-[protein] + CoA. Endoplasmic reticulum palmitoyl acyltransferase that mediates palmitoylation of proteins such as AMFR, CALX, ITPR1 and TFRC. Palmitoylates calnexin (CALX), which is required for its association with the ribosome-translocon complex and efficient folding of glycosylated proteins. Mediates palmitoylation of AMFR, promoting AMFR distribution to the peripheral endoplasmic reticulum. Together with SELENOK, palmitoylates ITPR1 in immune cells, leading to regulate ITPR1 stability and function. Stearoyltransferase that mediates stearoylation of TFRC to inhibit TFRC-mediated activation of the JNK pathway and mitochondrial fragmentation. This is Palmitoyltransferase ZDHHC6 from Bos taurus (Bovine).